The chain runs to 89 residues: Late cornified envelope protein 3A (89 aa).

Low complexity-rich tracts occupy residues 1 to 10 (MSCQQNQQQC) and 17 to 46 (PAKS…SERS). Disordered stretches follow at residues 1–46 (MSCQ…SERS) and 62–89 (CQSS…AGCC).

Belongs to the LCE family. As to quaternary structure, interacts with CYSRT1; the interaction is direct. Skin-specific. Expression was readily detected in adult trunk skin, adult arm skin, fetal skin, penal skin, vulva, esophagus and tongue. Not expressed in the cervix, rectum, lung, colon, or placenta.

Functionally, a structural component of the cornified envelope of the stratum corneum involved in innate cutaneous host defense. Possesses defensin-like antimicrobial activity against a broad spectrum of Gram-positive and Gram-negative bacteria, both aerobic and anaerobic species. Upon inflammation, may regulate skin barrier repair by shaping cutaneous microbiota composition and immune response to bacterial antigens. The protein is Late cornified envelope protein 3A of Homo sapiens (Human).